The following is a 426-amino-acid chain: Glutamate-1-semialdehyde 2,1-aminomutase (426 aa).

Lysine 265 is modified (N6-(pyridoxal phosphate)lysine).

The protein belongs to the class-III pyridoxal-phosphate-dependent aminotransferase family. HemL subfamily. In terms of assembly, homodimer. The cofactor is pyridoxal 5'-phosphate.

Its subcellular location is the cytoplasm. The enzyme catalyses (S)-4-amino-5-oxopentanoate = 5-aminolevulinate. Its pathway is porphyrin-containing compound metabolism; protoporphyrin-IX biosynthesis; 5-aminolevulinate from L-glutamyl-tRNA(Glu): step 2/2. This is Glutamate-1-semialdehyde 2,1-aminomutase from Shigella sonnei (strain Ss046).